A 182-amino-acid polypeptide reads, in one-letter code: NADH-quinone oxidoreductase subunit I (182 aa).

2 consecutive 4Fe-4S ferredoxin-type domains span residues 50 to 82 (IILS…LQKA) and 92 to 121 (EFFR…MTPD). 8 residues coordinate [4Fe-4S] cluster: Cys-62, Cys-65, Cys-68, Cys-72, Cys-101, Cys-104, Cys-107, and Cys-111.

The protein belongs to the complex I 23 kDa subunit family. As to quaternary structure, NDH-1 is composed of 14 different subunits. Subunits NuoA, H, J, K, L, M, N constitute the membrane sector of the complex. The cofactor is [4Fe-4S] cluster.

It localises to the cell inner membrane. It carries out the reaction a quinone + NADH + 5 H(+)(in) = a quinol + NAD(+) + 4 H(+)(out). NDH-1 shuttles electrons from NADH, via FMN and iron-sulfur (Fe-S) centers, to quinones in the respiratory chain. The immediate electron acceptor for the enzyme in this species is believed to be ubiquinone. Couples the redox reaction to proton translocation (for every two electrons transferred, four hydrogen ions are translocated across the cytoplasmic membrane), and thus conserves the redox energy in a proton gradient. The polypeptide is NADH-quinone oxidoreductase subunit I (Psychrobacter arcticus (strain DSM 17307 / VKM B-2377 / 273-4)).